The sequence spans 108 residues: Integration host factor subunit alpha (108 aa).

This sequence belongs to the bacterial histone-like protein family. In terms of assembly, heterodimer of an alpha and a beta chain.

Functionally, this protein is one of the two subunits of integration host factor, a specific DNA-binding protein that functions in genetic recombination as well as in transcriptional and translational control. This chain is Integration host factor subunit alpha, found in Rhodopseudomonas palustris (strain BisB18).